The chain runs to 946 residues: Calcium-transporting ATPase type 2C member 2 (946 aa).

The Cytoplasmic segment spans residues 1–106 (MVEGRVSEFL…DNSEPVWKKY (106 aa)). The segment at 71–95 (VDLHTGLSEFSVTQRRLAHGWNEFV) is interaction with ORAI1. Residues 107-127 (LDQFKNPLILLLLGSALVSVL) form a helical membrane-spanning segment. The Extracellular portion of the chain corresponds to 128 to 129 (TK). Residues 130–150 (EYEDAVSIATAVLVVVTVAFI) traverse the membrane as a helical segment. Topologically, residues 151-231 (QEYRSEKSLE…EAEPCSKTDS (81 aa)) are cytoplasmic. Residues 232–252 (PLTGGGDLTTLSNIVFMGTLV) traverse the membrane as a helical segment. Topologically, residues 253 to 293 (QYGRGQGVVIGTGESSQFGEVFKMMQAEETPKTPLQKSMDR) are extracellular. Thr-264 bears the Phosphothreonine mark. 2 positions are modified to phosphoserine: Ser-267 and Ser-268. Residues 294 to 314 (LGKQLTLFSFGIIGLIMLIGW) traverse the membrane as a helical segment. The Cytoplasmic segment spans residues 315–331 (SQGKQLLSMFTIGVSLA). Positions 332, 333, 335, and 337 each coordinate Ca(2+). A helical transmembrane segment spans residues 332–352 (VAAIPEGLPIVVMVTLVLGVL). The Extracellular segment spans residues 353–750 (RMAKKRVIVK…ISALSLITLS (398 aa)). Catalysis depends on Asp-379, which acts as the 4-aspartylphosphate intermediate. Mg(2+) is bound by residues Asp-674 and Asp-678. The chain crosses the membrane as a helical span at residues 751 to 771 (TVFNLPSPLNAMQILWINIIM). Residues Asn-768 and Asp-772 each coordinate Ca(2+). The Cytoplasmic portion of the chain corresponds to 772-804 (DGPPAQSLGVEPVDKDAFRQPPRSVRDTILSRA). Residues 805 to 825 (LILKILMSAAIIISGTLFIFW) form a helical membrane-spanning segment. Residues 826–837 (KEMPEDRASTPR) lie on the Extracellular side of the membrane. A helical membrane pass occupies residues 838–855 (TTTMTFTCFVFFDLFNAL). The Cytoplasmic portion of the chain corresponds to 856–874 (TCRSQTKLIFEIGFLRNHM). A helical transmembrane segment spans residues 875–895 (FLYSVLGSILGQLAVIYIPPL). The Extracellular portion of the chain corresponds to 896–905 (QRVFQTENLG). Residues 906-926 (ALDLLFLTGLASSVFILSELL) form a helical membrane-spanning segment. Residues 927–946 (KLCEKYCCSPKRVQMHPEDV) are Cytoplasmic-facing.

Belongs to the cation transport ATPase (P-type) (TC 3.A.3) family. Type IIA subfamily. Interacts (via N-terminus) with ORAI1 (via N- and C-termini); this interaction regulates Ca(2+) influx at the plasma membrane. In terms of tissue distribution, highly expressed in the gastrointestinal and respiratory tracts, prostate, thyroid, salivary, and mammary glands. Expressed in colon epithelial cells (at protein level). Expressed in brain and testis (at protein level).

Its subcellular location is the golgi apparatus. The protein resides in the trans-Golgi network membrane. The protein localises to the cell membrane. It is found in the basolateral cell membrane. The catalysed reaction is Ca(2+)(in) + ATP + H2O = Ca(2+)(out) + ADP + phosphate + H(+). It catalyses the reaction Mn(2+)(in) + ATP + H2O = Mn(2+)(out) + ADP + phosphate + H(+). In terms of biological role, ATP-driven pump that supplies the Golgi apparatus with Ca(2+) and Mn(2+) ions, both essential cofactors for processing and trafficking of newly synthesized proteins in the secretory pathway. Within a catalytic cycle, acquires Ca(2+) or Mn(2+) ions on the cytoplasmic side of the membrane and delivers them to the lumenal side. The transfer of ions across the membrane is coupled to ATP hydrolysis and is associated with a transient phosphorylation that shifts the pump conformation from inward-facing to outward-facing state. Induces Ca(2+) influx independently of its ATP-driven pump function. At the basolateral membrane of mammary epithelial cells, interacts with Ca(2+) channel ORAI1 and mediates Ca(2+) entry independently of the Ca(2+) content of endoplasmic reticulum or Golgi stores. May facilitate transepithelial transport of large quantities of Ca(2+) for milk secretion via activation of Ca(2+) influx channels at the plasma membrane and active Ca(2+) transport at the Golgi apparatus. This Homo sapiens (Human) protein is Calcium-transporting ATPase type 2C member 2.